A 611-amino-acid polypeptide reads, in one-letter code: MITSQLLPALTLVLLLFKEGGAWSYNASTEAMTFDEASTYCQQRYTHLVAIQNQEEIKYLNSMFTYTPTYYWIGIRKVNKKWTWIGTQKLLTEEAKNWAPGEPNNKQNDEDCVEIYIKRDKDSGKWNDERCDKKKLALCYTAACTPTSCSGHGECVETVNNYTCKCHPGFRGLRCEQVVTCQAQEAPEHGSLVCTHPLGTFSYNSSCFVSCDKGYLPSSTEATQCTSTGEWSASPPACNVVECSALTNPCHGVMDCLQSSGNFPWNMTCTFECEEGFELMGPKRLQCTSSGNWDNRKPTCKAVTCGAIGHPQNGSVSCSHSPAGEFSVRSSCNFTCNEGFLMQGPAQIECTAQGQWSQQVPVCKASQCKALSSPERGYMSCLPGASGSFQSGSSCEFFCEKGFVLKGSKTLQCGLTGKWDSEEPTCEAVKCDAVQQPQDGLVRCAHSSTGEFTYKSSCAFSCEEGFELHGSAQLECTSQGQGVTGGPSCQVVQCFKSGSFRKDEHKLQGEPVFGAVCAFACPEGWTLNGSAALMCDATGHWSGMLPTCEAPTESSIPLAVGLTAGGTSLLTVASFLLWLLKRLRKRAKKFVPASSCQSLQSDGSYHMPCSI.

An N-terminal signal peptide occupies residues methionine 1 to alanine 22. Residues tryptophan 23 to tyrosine 140 enclose the C-type lectin domain. The Extracellular segment spans residues tryptophan 23–proline 557. Asparagine 26 carries an N-linked (GlcNAc...) asparagine glycan. 19 disulfide bridges follow: cysteine 41-cysteine 139, cysteine 112-cysteine 131, cysteine 144-cysteine 155, cysteine 149-cysteine 164, cysteine 166-cysteine 175, cysteine 181-cysteine 225, cysteine 194-cysteine 207, cysteine 211-cysteine 238, cysteine 243-cysteine 287, cysteine 256-cysteine 269, cysteine 273-cysteine 300, cysteine 305-cysteine 350, cysteine 336-cysteine 363, cysteine 368-cysteine 413, cysteine 399-cysteine 426, cysteine 431-cysteine 476, cysteine 462-cysteine 489, cysteine 494-cysteine 535, and cysteine 521-cysteine 548. Residues glutamate 102, asparagine 104, and glutamate 110 each contribute to the Ca(2+) site. A carbohydrate is bound by residues glutamate 102–glutamate 110, glutamate 114–arginine 119, and asparagine 127–glutamate 129. Ca(2+) contacts are provided by asparagine 127 and aspartate 128. The 36-residue stretch at threonine 141–glutamate 176 folds into the EGF-like domain. Asparagine 161 is a glycosylation site (N-linked (GlcNAc...) asparagine). 2 Sushi domains span residues valine 179 to valine 240 and valine 241 to alanine 302. N-linked (GlcNAc...) asparagine glycosylation occurs at asparagine 204. An N-linked (GlcNAc...) asparagine glycan is attached at asparagine 266. N-linked (GlcNAc...) asparagine glycosylation is found at asparagine 313 and asparagine 333. Sushi domains are found at residues valine 316 to alanine 365, glutamine 367 to alanine 428, lysine 430 to valine 491, and valine 492 to alanine 550. A glycan (N-linked (GlcNAc...) asparagine) is linked at asparagine 528. Residues leucine 558–leucine 579 traverse the membrane as a helical segment. Topologically, residues leucine 580–isoleucine 611 are cytoplasmic.

It belongs to the selectin/LECAM family. As to quaternary structure, interacts with SELPLG/PSGL1 and PODXL2 through the sialyl Lewis X epitope. SELPLG sulfation appears not to be required for this interaction.

It localises to the cell membrane. Functionally, cell-surface glycoprotein having a role in immunoadhesion. Mediates in the adhesion of blood neutrophils in cytokine-activated endothelium through interaction with SELPLG/PSGL1. May have a role in capillary morphogenesis. The protein is E-selectin (SELE) of Canis lupus familiaris (Dog).